An 800-amino-acid polypeptide reads, in one-letter code: Signaling protein YkoW (800 aa).

The next 7 membrane-spanning stretches (helical) occupy residues Val5–Leu27, Trp44–Ala66, Glu76–Val98, Leu103–Ile125, Ile135–Leu157, Val178–Phe200, and Thr215–Ser237. In terms of domain architecture, MHYT spans Tyr7–His201. Residues Gln255 to Ala319 enclose the PAS domain. Residues Tyr402–Phe536 enclose the GGDEF domain. Residues Lys545–Pro798 form the EAL domain.

It is found in the cell membrane. Functionally, probable signaling protein whose physiological role is not yet known. The protein is Signaling protein YkoW (ykoW) of Bacillus subtilis (strain 168).